A 65-amino-acid polypeptide reads, in one-letter code: Crotamine (65 aa).

The signal sequence occupies residues 1 to 22 (MKILYLLFAFLFLAFLSEPGNA). 2 short sequence motifs (nuclear localization signal) span residues 24–40 (KQCHKKGGHCFPKEKIC) and 49–61 (KMDCRWRWKCCKK). Disulfide bonds link Cys26/Cys58, Cys33/Cys52, and Cys40/Cys59.

It belongs to the crotamine-myotoxin family. Monomer. As to expression, expressed by the venom gland.

The protein resides in the secreted. Cationic peptide that possesses multiple functions. It acts as a cell-penetrating peptide (CPP), and as a potent voltage-gated potassium channel inhibitor. It exhibits antimicrobial activities, hind limb paralysis, and severe muscle necrosis by a non-enzymatic mechanism. As a cell-penetrating peptide, crotamine has high specificity for actively proliferating cells, and interacts inside the cell with subcellular and subnuclear structures, like vesicular compartments, chromosomes and centrioles. It penetrates into the cells as fast as five minutes after its addition to cell culture medium. In vivo, after intraperitoneal administration, it is found in cells of peritoneal fluid and bone marrow, demonstrating preferential nuclear and perinuclear localization. To enter the cell, it interacts with the chains of heparan sulfate membrane proteoglycan (HSPG), and is endocytosed (in complex with HSPG) in vesicles which are transported into the cell with the help of clathrin. Inside the cell, crotamine accumulates in lysosomal vesicles. As soon as the peptide accumulates in endosomes/lysosomes vesicles, these compartments are disrupted and their contents released into the cytosol. This loss of lysosomal content induces cell death at high concentrations, or promotes the distribution of crotamine in cytoplasmic compartments, which is a step before crotamine nuclear uptake. As a potassium channel inhibitor, this toxin selectively inhibits Kv1.1/KCNA1, Kv1.2/KCNA2 and Kv1.3/KCNA3 channels with an IC(50) of 369, 386 and 287 nM, respectively. The inhibition of Kv1.3/KCNA channels induced by this toxin occurs rapidly and is voltage-independent. The channel inhibition is reversible after washing, suggesting a pure and classical channel blockage effect, without effects in potassium channel kinetics. As an antimicrobial peptide, crotamine shows antibacterial activity against E.coli and B.subtilis, and antifungal activity against Candida spp., Trichosporon spp. and C.neoformans. It kills bacteria through membrane permeabilization. This chain is Crotamine (CRO2), found in Crotalus durissus terrificus (South American rattlesnake).